Reading from the N-terminus, the 345-residue chain is CRISPR-associated endonuclease Cas1 1 (345 aa).

A divalent metal cation-binding residues include glutamate 168, histidine 239, and glutamate 254.

The protein belongs to the CRISPR-associated endonuclease Cas1 family. In terms of assembly, forms a heterotetramer with a Cas2 homodimer. Homodimer. Requires a divalent metal cation as cofactor.

CRISPR (clustered regularly interspaced short palindromic repeat), is an adaptive immune system that provides protection against mobile genetic elements (viruses, transposable elements and conjugative plasmids). CRISPR clusters contain sequences complementary to antecedent mobile elements and target invading nucleic acids. CRISPR clusters are transcribed and processed into CRISPR RNA (crRNA). Involved in the integration of spacer DNA into the CRISPR cassette. Acts as a dsDNA and ssRNA nuclease, binds to linear and circular dsDNA and linear ssRNA and ssDNA. In Archaeoglobus fulgidus (strain ATCC 49558 / DSM 4304 / JCM 9628 / NBRC 100126 / VC-16), this protein is CRISPR-associated endonuclease Cas1 1.